The sequence spans 430 residues: MHRSLSLRAVVCLSTLLPASLLYAAPDVDIETLKQELLELKQRYEAQQKALAVLEQRVRQVEDQPATPAPKRLAKSPADFKQSGSTVAASSGTGGATGGSSYGQSLKDDSEPAQSVSNLYNEASGFFGNGKFSFETGITYARYDARQLTLNGFLALDSIFLGNINLDRIKADNWTLDLTGRYNLDNRWQFDVNVPVVYRESTYQSGGASGGDPQATSEESVSRDPTIGDVNFGIAYKFLDESATMPDAVVSVRVKAPTGKEPFGIKLVRSTANDNLYVPESLPTGNGVWSITPGLSLVKTFDPAVLFGSVSYTHNLEDSFDDISSDVNQKVGGKVRLGDSFQFGVGVAFALNERMSMSFSVSDLIQRKSKLKPDGGGWQSIVSSDANAGYFNVGMTIAASENLTIVPNLAIGMTDDAPDFTFSLKFPYYF.

Residues 1–24 (MHRSLSLRAVVCLSTLLPASLLYA) form the signal peptide. Residues 25-131 (APDVDIETLK…EASGFFGNGK (107 aa)) are Periplasmic-facing. Positions 29-64 (DIETLKQELLELKQRYEAQQKALAVLEQRVRQVEDQ) form a coiled coil. The interval 62–114 (EDQPATPAPKRLAKSPADFKQSGSTVAASSGTGGATGGSSYGQSLKDDSEPAQ) is disordered. The span at 92 to 101 (GTGGATGGSS) shows a compositional bias: gly residues. Residues 113-125 (AQSVSNLYNEASG) form an alpha helical plug region. Residues 132–142 (FSFETGITYAR) form a beta stranded membrane-spanning segment. Residues 143-172 (YDARQLTLNGFLALDSIFLGNINLDRIKAD) lie on the Extracellular side of the membrane. Residues 173–183 (NWTLDLTGRYN) traverse the membrane as a beta stranded segment. Topologically, residues 184–189 (LDNRWQ) are periplasmic. A beta stranded membrane pass occupies residues 190-198 (FDVNVPVVY). Residues 199–224 (RESTYQSGGASGGDPQATSEESVSRD) lie on the Extracellular side of the membrane. The tract at residues 203 to 223 (YQSGGASGGDPQATSEESVSR) is disordered. A beta stranded transmembrane segment spans residues 225 to 238 (PTIGDVNFGIAYKF). At 239-246 (LDESATMP) the chain is on the periplasmic side. The chain crosses the membrane as a beta stranded span at residues 247–256 (DAVVSVRVKA). The Extracellular segment spans residues 257 to 288 (PTGKEPFGIKLVRSTANDNLYVPESLPTGNGV). A beta stranded membrane pass occupies residues 289-298 (WSITPGLSLV). Topologically, residues 299–304 (KTFDPA) are periplasmic. The chain crosses the membrane as a beta stranded span at residues 305-314 (VLFGSVSYTH). The Extracellular segment spans residues 315–339 (NLEDSFDDISSDVNQKVGGKVRLGD). Residues 340-348 (SFQFGVGVA) traverse the membrane as a beta stranded segment. The Periplasmic portion of the chain corresponds to 349–356 (FALNERMS). A beta stranded membrane pass occupies residues 357-365 (MSFSVSDLI). At 366 to 386 (QRKSKLKPDGGGWQSIVSSDA) the chain is on the extracellular side. Residues 387 to 397 (NAGYFNVGMTI) traverse the membrane as a beta stranded segment. Residues 398–404 (AASENLT) lie on the Periplasmic side of the membrane. Residues 405-412 (IVPNLAIG) traverse the membrane as a beta stranded segment. The Extracellular portion of the chain corresponds to 413-419 (MTDDAPD). The chain crosses the membrane as a beta stranded span at residues 420 to 428 (FTFSLKFPY). Residues 429 to 430 (YF) lie on the Periplasmic side of the membrane.

The protein belongs to the amyloid transporter (TC 9.B.153) family. As to quaternary structure, homotrimer.

The protein resides in the cell outer membrane. In terms of biological role, transports fibril components across the outer membrane. Upon overexpression of the endogenous six-gene locus (fapA-fapF) in situ cells form large clumps during liquid growth, make large amounts of biofilm and produce amyloid fibrils. Expression of the 6 gene operon in E.coli strain BL21(DE3) induces flocculation and biofilm formation with copious extracellular fibrils. This Pseudomonas fluorescens protein is Functional amyloid transporter FapF.